The following is a 453-amino-acid chain: Glutamate--tRNA ligase 2 (453 aa).

A 'HIGH' region motif is present at residues 10-20 (PSPTGFLHIGG). The 'KMSKS' region signature appears at 232-236 (KLSKR). Lysine 235 contributes to the ATP binding site.

Belongs to the class-I aminoacyl-tRNA synthetase family. Glutamate--tRNA ligase type 1 subfamily. Monomer.

The protein localises to the cytoplasm. It carries out the reaction tRNA(Glu) + L-glutamate + ATP = L-glutamyl-tRNA(Glu) + AMP + diphosphate. Functionally, catalyzes the attachment of glutamate to tRNA(Glu) in a two-step reaction: glutamate is first activated by ATP to form Glu-AMP and then transferred to the acceptor end of tRNA(Glu). This is Glutamate--tRNA ligase 2 from Wolbachia sp. subsp. Brugia malayi (strain TRS).